The chain runs to 349 residues: Cobalt-precorrin-5B C(1)-methyltransferase (349 aa).

This sequence belongs to the CbiD family.

The enzyme catalyses Co-precorrin-5B + S-adenosyl-L-methionine = Co-precorrin-6A + S-adenosyl-L-homocysteine. The protein operates within cofactor biosynthesis; adenosylcobalamin biosynthesis; cob(II)yrinate a,c-diamide from sirohydrochlorin (anaerobic route): step 6/10. In terms of biological role, catalyzes the methylation of C-1 in cobalt-precorrin-5B to form cobalt-precorrin-6A. This chain is Cobalt-precorrin-5B C(1)-methyltransferase, found in Saccharolobus islandicus (strain M.16.27) (Sulfolobus islandicus).